We begin with the raw amino-acid sequence, 208 residues long: Small ribosomal subunit protein uS2 (208 aa).

The protein belongs to the universal ribosomal protein uS2 family.

This is Small ribosomal subunit protein uS2 from Cenarchaeum symbiosum (strain A).